A 605-amino-acid chain; its full sequence is Bifunctional purine biosynthesis protein ADE16 (605 aa).

Positions 1–147 constitute an MGS-like domain; that stretch reads MSSEAPIALL…KNHGRVSIIS (147 aa). IMP-binding positions include 35–38, 65–68, 102–103, and 126–127; these read SGGT, RVKT, CN, and DI. The Proton donor/acceptor; for FAICAR cyclization activity role is filled by Lys138. Residues 219-220, His279, Gly327, Asp350, Asn442, and Arg462 contribute to the 5-amino-1-(5-phospho-beta-D-ribosyl)imidazole-4-carboxamide site; that span reads RY. The active-site Proton acceptor; for AICAR formyltransferase activity is the His279. Residue Ile463 participates in (6R)-10-formyltetrahydrofolate binding. Position 554 (Phe554) interacts with 5-amino-1-(5-phospho-beta-D-ribosyl)imidazole-4-carboxamide. Asp559 lines the (6R)-10-formyltetrahydrofolate pocket. Position 601 (Arg601) interacts with 5-amino-1-(5-phospho-beta-D-ribosyl)imidazole-4-carboxamide.

This sequence belongs to the PurH family. In terms of assembly, homodimer.

The protein resides in the cytoplasm. The protein localises to the cytosol. It carries out the reaction (6R)-10-formyltetrahydrofolate + 5-amino-1-(5-phospho-beta-D-ribosyl)imidazole-4-carboxamide = 5-formamido-1-(5-phospho-D-ribosyl)imidazole-4-carboxamide + (6S)-5,6,7,8-tetrahydrofolate. The enzyme catalyses IMP + H2O = 5-formamido-1-(5-phospho-D-ribosyl)imidazole-4-carboxamide. It participates in purine metabolism; IMP biosynthesis via de novo pathway; 5-formamido-1-(5-phospho-D-ribosyl)imidazole-4-carboxamide from 5-amino-1-(5-phospho-D-ribosyl)imidazole-4-carboxamide (10-formyl THF route): step 1/1. It functions in the pathway purine metabolism; IMP biosynthesis via de novo pathway; IMP from 5-formamido-1-(5-phospho-D-ribosyl)imidazole-4-carboxamide: step 1/1. Functionally, bifunctional enzyme that catalyzes the last two steps of purine biosynthesis. Acts as a transformylase that incorporates a formyl group to the AMP analog AICAR (5-amino-1-(5-phospho-beta-D-ribosyl)imidazole-4-carboxamide) to produce the intermediate formyl-AICAR (FAICAR). Also catalyzes the cyclization of FAICAR to IMP. The chain is Bifunctional purine biosynthesis protein ADE16 from Cryptococcus neoformans var. grubii serotype A (strain H99 / ATCC 208821 / CBS 10515 / FGSC 9487) (Filobasidiella neoformans var. grubii).